The chain runs to 284 residues: uncharacterized protein (284 aa).

Gln-54 is a binding site for FMN. The Proton donor role is filled by Cys-83. FMN-binding positions include Lys-125, His-153, 183–185 (NGG), and 207–208 (AN).

This sequence belongs to the Dus family. The cofactor is FMN.

Its function is as follows. Catalyzes the synthesis of dihydrouridine, a modified base found in the D-loop of most tRNAs. This is an uncharacterized protein from Caenorhabditis elegans.